We begin with the raw amino-acid sequence, 393 residues long: Endoplasmic reticulum junction formation protein lunapark-A (393 aa).

Topologically, residues 1 to 45 (MGAVVSRWRAKPSTVEVLEGLDKDIQVLEEYREKNHKQLKLWVYR) are cytoplasmic. Residues 46 to 66 (LLLYSALLYLMACAVVYAWYI) form a helical membrane-spanning segment. The Lumenal segment spans residues 67–69 (PER). The helical transmembrane segment at 70-90 (MIGKLIVASPFLLFPLLIWLL) threads the bilayer. Over 91 to 393 (RKLLIILYNK…EQDVSAMEVE (303 aa)) the chain is Cytoplasmic. A coiled-coil region spans residues 95–130 (IILYNKRTERNNEKLEELKAEKKKILEQVMETETYK). Positions 146–209 (KLELETQPIG…PPEKGLSAST (64 aa)) are disordered. The segment covering 176 to 190 (TGRPPPVPVPGPSVP) has biased composition (pro residues). Residues 269–294 (CQQCLSHNGMALKEEFEYIAFRCAYC) form a C4-type; plays a role in ER morphology zinc finger. A disordered region spans residues 314–393 (AAEAKTSQDP…EQDVSAMEVE (80 aa)). 2 stretches are compositionally biased toward basic and acidic residues: residues 340 to 353 (ESKE…KAGD) and 364 to 383 (EEMK…KSDG).

It belongs to the lunapark family. As to quaternary structure, homodimer; homodimerization requires the C4-type zinc finger motif and decreases during mitosis in a phosphorylation-dependent manner. Phosphorylated. Phosphorylation occurs during interphase. Phosphorylation also occurs during mitosis; these phosphorylations reduce both its homodimerization and the ER three-way tubular junction formation.

It is found in the endoplasmic reticulum membrane. Its function is as follows. Endoplasmic reticulum (ER)-shaping membrane protein that plays a role in determining ER morphology. Involved in the stabilization of nascent three-way ER tubular junctions within the ER network. May also play a role as a curvature-stabilizing protein within three-way ER tubular junction network. The sequence is that of Endoplasmic reticulum junction formation protein lunapark-A (lnpka) from Danio rerio (Zebrafish).